A 58-amino-acid polypeptide reads, in one-letter code: uncharacterized protein (58 aa).

A helical transmembrane segment spans residues 12 to 32; that stretch reads VMTLLITISILIVLAVLLVTI.

It localises to the cell membrane. This is an uncharacterized protein from Bacillus subtilis (strain 168).